A 1544-amino-acid chain; its full sequence is MEAATTLHPGPRPALPLGGPGPLGEFLPPPECPVFEPSWEEFADPFAFIHKIRPIAEQTGICKVRPPPDWQPPFACDVDKLHFTPRIQRLNELEAQTRVKLNFLDQIAKYWELQGSTLKIPHVERKILDLFQLNKLVAEEGGFAVVCKDRKWTKIATKMGFAPGKAVGSHIRGHYERILNPYNLFLSGDSLRCLQKPNLTTDTKDKEYKPHDIPQRQSVQPSETCPPARRAKRMRAEAMNIKIEPEETTEARTHNLRRRMGCPTPKCENEKEMKSSIKQEPIERKDYIVENEKEKPKSRSKKATNAVDLYVCLLCGSGNDEDRLLLCDGCDDSYHTFCLIPPLHDVPKGDWRCPKCLAQECSKPQEAFGFEQAARDYTLRTFGEMADAFKSDYFNMPVHMVPTELVEKEFWRLVSTIEEDVTVEYGADIASKEFGSGFPVRDGKIKLSPEEEEYLDSGWNLNNMPVMEQSVLAHITADICGMKLPWLYVGMCFSSFCWHIEDHWSYSINYLHWGEPKTWYGVPGYAAEQLENVMKKLAPELFVSQPDLLHQLVTIMNPNTLMTHEVPVYRTNQCAGEFVITFPRAYHSGFNQGFNFAEAVNFCTVDWLPLGRQCVEHYRLLHRYCVFSHDEMICKMASKADVLDVVVASTVQKDMAIMIEDEKALRETVRKLGVIDSERMDFELLPDDERQCVKCKTTCFMSAISCSCKPGLLVCLHHVKELCSCPPYKYKLRYRYTLDDLYPMMNALKLRAESYNEWALNVNEALEAKINKKKSLVSFKALIEESEMKKFPDNDLLRHLRLVTQDAEKCASVAQQLLNGKRQTRYRSGGGKSQNQLTVNELRQFVTQLYALPCVLSQTPLLKDLLNRVEDFQQHSQKLLSEETPSAAELQDLLDVSFEFDVELPQLAEMRIRLEQARWLEEVQQACLDPSSLTLDDMRRLIDLGVGLAPYSAVEKAMARLQELLTVSEHWDDKAKSLLKARPRHSLNSLATAVKEIEEIPAYLPNGAALKDSVQRARDWLQDVEGLQAGGRVPVLDTLIELVTRGRSIPVHLNSLPRLETLVAEVQAWKECAVNTFLTENSPYSLLEVLCPRCDIGLLGLKRKQRKLKEPLPNGKKKSTKLESLSDLERALTESKETASAMATLGEARLREMEALQSLRLANEGKLLSPLQDVDIKICLCQKAPAAPMIQCELCRDAFHTSCVAVPSISQGLRIWLCPHCRRSEKPPLEKILPLLASLQRIRVRLPEGDALRYMIERTVNWQHRAQQLLSSGNLKFVQDRVGSGLLYSRWQASAGQVSDTNKVSQPPGTTSFSLPDDWDNRTSYLHSPFSTGRSCIPLHGVSPEVNELLMEAQLLQVSLPEIQELYQTLLAKPSPAQQTDRSSPVRPSSEKNDCCRGKRDGINSLERKLKRRLEREGLSSERWERVKKMRTPKKKKIKLSHPKDMNNFKLERERSYELVRSAETHSLPSDTSYSEQEDSEDEDAICPAVSCLQPEGDEVDWVQCDGSCNQWFHQVCVGVSPEMAEKEDYICVRCTVKDAPSRK.

A JmjN domain is found at C32 to P73. Residues T97–S187 enclose the ARID domain. Glycyl lysine isopeptide (Lys-Gly) (interchain with G-Cter in SUMO2) cross-links involve residues K148, K204, K209, K242, K274, and K278. A disordered region spans residues T201–R230. The span at D202 to P214 shows a compositional bias: basic and acidic residues. The segment at L309–Q359 adopts a PHD-type 1 zinc-finger fold. Y425 contributes to the 2-oxoglutarate binding site. In terms of domain architecture, JmjC spans E453–R619. The Fe cation site is built by H499 and E501. S507, N509, and K517 together coordinate 2-oxoglutarate. H587 lines the Fe cation pocket. The C5HC2 zinc finger occupies C692–M744. A Glycyl lysine isopeptide (Lys-Gly) (interchain with G-Cter in SUMO2) cross-link involves residue K769. An N6-acetyllysine modification is found at K832. S986 bears the Phosphoserine mark. The PHD-type 2 zinc-finger motif lies at I1176 to S1224. S1328 is subject to Phosphoserine. Residues P1374–R1400 form a disordered region. The span at P1376–R1387 shows a compositional bias: polar residues. Residues S1389–R1400 show a composition bias toward basic and acidic residues. Residue K1450 forms a Glycyl lysine isopeptide (Lys-Gly) (interchain with G-Cter in SUMO2) linkage. A Phosphoserine modification is found at S1456. The PHD-type 3 zinc-finger motif lies at D1484–K1538.

This sequence belongs to the JARID1 histone demethylase family. As to quaternary structure, interacts with FOXG1B, PAX9, MYC, MYCN and RB1. Interacts with HDAC1, HDAC4, HDAC5 and HDAC7. Interacts (via PHD-type 1 zinc finger) with histone H3 unmodified at 'Lys-4'; the interaction is inhibited when histone H3 is methylated at 'Arg-2' or 'Lys-4'. Fe(2+) serves as cofactor. Ubiquitously expressed, with highest levels in testis. Down-regulated in melanoma and glioblastoma. Up-regulated in breast cancer (at protein level).

It is found in the nucleus. The enzyme catalyses N(6),N(6),N(6)-trimethyl-L-lysyl(4)-[histone H3] + 3 2-oxoglutarate + 3 O2 = L-lysyl(4)-[histone H3] + 3 formaldehyde + 3 succinate + 3 CO2. Its activity is regulated as follows. Several specific inhibitors are being developed and tested. The inhibitor KDOAM-25 inhibits its demethylase activity, resulting to cell cycle arrest in myeloma cells. In terms of biological role, histone demethylase that demethylates 'Lys-4' of histone H3, thereby playing a central role in histone code. Does not demethylate histone H3 'Lys-9' or H3 'Lys-27'. Demethylates trimethylated, dimethylated and monomethylated H3 'Lys-4'. Acts as a transcriptional corepressor for FOXG1B and PAX9. Favors the proliferation of breast cancer cells by repressing tumor suppressor genes such as BRCA1 and HOXA5. In contrast, may act as a tumor suppressor for melanoma. Represses the CLOCK-BMAL1 heterodimer-mediated transcriptional activation of the core clock component PER2. In Homo sapiens (Human), this protein is Lysine-specific demethylase 5B (KDM5B).